The following is a 295-amino-acid chain: Putative NADH-ubiquinone oxidoreductase MJ0520 (295 aa).

8 helical membrane-spanning segments follow: residues 8-28, 69-89, 129-149, 163-183, 199-219, 220-240, 243-263, and 273-293; these read LIGA…LLGL, LYIF…IIAI, VFSA…YLTT, IHGS…ILLV, IVSG…YIAE, AIAY…PLVI, PVLT…VNGL, and VMLQ…RLIV.

Belongs to the complex I subunit 1 family.

It localises to the cell membrane. The enzyme catalyses a ubiquinone + NADH + 5 H(+)(in) = a ubiquinol + NAD(+) + 4 H(+)(out). This chain is Putative NADH-ubiquinone oxidoreductase MJ0520, found in Methanocaldococcus jannaschii (strain ATCC 43067 / DSM 2661 / JAL-1 / JCM 10045 / NBRC 100440) (Methanococcus jannaschii).